The following is a 140-amino-acid chain: Small ribosomal subunit protein uS12 (140 aa).

A disordered region spans residues 1 to 44; it reads MPTFNQLVRKGRKTMEKNSQAPALQKGFNSLRKKTTDASAPQKR. Asp102 bears the 3-methylthioaspartic acid mark. Residues 120 to 140 form a disordered region; the sequence is VAKRRQARSKYGAKRPKEAKK. Positions 121–140 are enriched in basic residues; that stretch reads AKRRQARSKYGAKRPKEAKK.

It belongs to the universal ribosomal protein uS12 family. As to quaternary structure, part of the 30S ribosomal subunit. Contacts proteins S8 and S17. May interact with IF1 in the 30S initiation complex.

Functionally, with S4 and S5 plays an important role in translational accuracy. In terms of biological role, interacts with and stabilizes bases of the 16S rRNA that are involved in tRNA selection in the A site and with the mRNA backbone. Located at the interface of the 30S and 50S subunits, it traverses the body of the 30S subunit contacting proteins on the other side and probably holding the rRNA structure together. The combined cluster of proteins S8, S12 and S17 appears to hold together the shoulder and platform of the 30S subunit. This is Small ribosomal subunit protein uS12 from Lachnoclostridium phytofermentans (strain ATCC 700394 / DSM 18823 / ISDg) (Clostridium phytofermentans).